The primary structure comprises 257 residues: Probable septum site-determining protein MinC (257 aa).

The protein belongs to the MinC family. As to quaternary structure, interacts with MinD and FtsZ.

Cell division inhibitor that blocks the formation of polar Z ring septums. Rapidly oscillates between the poles of the cell to destabilize FtsZ filaments that have formed before they mature into polar Z rings. Prevents FtsZ polymerization. The protein is Probable septum site-determining protein MinC of Burkholderia lata (strain ATCC 17760 / DSM 23089 / LMG 22485 / NCIMB 9086 / R18194 / 383).